We begin with the raw amino-acid sequence, 298 residues long: tRNA-uridine aminocarboxypropyltransferase 2 (298 aa).

Methionine 1 bears the N-acetylmethionine mark. Residues 1-52 (MESQKEARILQEPVARPPGASRSQTPNAKERQEGGPVPAAAALGAEADDDSA) are disordered. Serine 132 carries the phosphoserine modification. A DXTW motif is present at residues 178-181 (DGTW).

This sequence belongs to the TDD superfamily. DTWD2 family.

It localises to the nucleus. The protein localises to the cytoplasm. It catalyses the reaction a uridine in tRNA + S-adenosyl-L-methionine = a 3-[(3S)-3-amino-3-carboxypropyl]uridine in tRNA + S-methyl-5'-thioadenosine + H(+). Catalyzes the formation of 3-(3-amino-3-carboxypropyl)uridine (acp3U) at position 20a in the D-loop of several cytoplasmic tRNAs (acp3U(20a)). Also has a weak activity to form acp3U at position 20 in the D-loop of tRNAs (acp3U(20)). Involved in glycoRNA biosynthesis by mediating formation of acp3U, which acts as an attachment site for N-glycans on tRNAs. GlycoRNAs consist of RNAs modified with secretory N-glycans that are presented on the cell surface. The sequence is that of tRNA-uridine aminocarboxypropyltransferase 2 from Macaca fascicularis (Crab-eating macaque).